The following is a 516-amino-acid chain: Nucleolar complex protein 4 homolog (516 aa).

The next 3 membrane-spanning stretches (helical) occupy residues 296-316, 347-367, and 375-395; these read SACDVGGAISLLALNGLFILI, FFHLADLFLSSSHLPAYLVAA, and LALTAPPEALLMVLPLICNLL.

The protein belongs to the CBF/MAK21 family.

The protein localises to the nucleus membrane. It is found in the nucleus. The protein resides in the nucleolus. The polypeptide is Nucleolar complex protein 4 homolog (Noc4l) (Rattus norvegicus (Rat)).